The sequence spans 481 residues: Tripartite motif-containing protein 10 (481 aa).

The segment at 16 to 61 adopts an RING-type zinc-finger fold; that stretch reads CPICQGTLREPVTIDCGHNFCRACLTRYCEIPGPDLEESPTCPLCK. The B box-type zinc finger occupies 94–135; sequence GEEDVCQEHGEKIYFFCEDDEMQLCVVCREAGEHATHTMRFL. Residues cysteine 99, histidine 102, cysteine 121, and histidine 127 each contribute to the Zn(2+) site. Residues 150–177 adopt a coiled-coil conformation; the sequence is LKCLRKEREEIQEIQSRENKRMQVLLTQ. Residues 292-481 enclose the B30.2/SPRY domain; that stretch reads REMKMFLEKL…GRGSSFSLSS (190 aa).

The protein belongs to the TRIM/RBCC family. Interacts with IFNAR1; this interaction prevents association of IFNAR1 with TYK2.

The protein localises to the cytoplasm. E3 ligase that plays an essential role in the differentiation and survival of terminal erythroid cells. May directly bind to PTEN and promote its ubiquitination, resulting in its proteasomal degradation and activation of hypertrophic signaling. In addition, plays a role in immune response regulation by repressing the phosphorylation of STAT1 and STAT2 in the interferon/JAK/STAT signaling pathway independent of its E3 ligase activity. Mechanistically, interacts with the intracellular domain of IFNAR1 and thereby inhibits the association between TYK2 and IFNAR1. In Homo sapiens (Human), this protein is Tripartite motif-containing protein 10 (TRIM10).